A 370-amino-acid polypeptide reads, in one-letter code: Histidinol-phosphate aminotransferase (370 aa).

At Lys220 the chain carries N6-(pyridoxal phosphate)lysine.

Belongs to the class-II pyridoxal-phosphate-dependent aminotransferase family. Histidinol-phosphate aminotransferase subfamily. Homodimer. The cofactor is pyridoxal 5'-phosphate.

It catalyses the reaction L-histidinol phosphate + 2-oxoglutarate = 3-(imidazol-4-yl)-2-oxopropyl phosphate + L-glutamate. Its pathway is amino-acid biosynthesis; L-histidine biosynthesis; L-histidine from 5-phospho-alpha-D-ribose 1-diphosphate: step 7/9. The protein is Histidinol-phosphate aminotransferase of Granulibacter bethesdensis (strain ATCC BAA-1260 / CGDNIH1).